The primary structure comprises 562 residues: Dihydroxy-acid dehydratase 2 (562 aa).

Residue cysteine 50 coordinates [2Fe-2S] cluster. A Mg(2+)-binding site is contributed by aspartate 82. A [2Fe-2S] cluster-binding site is contributed by cysteine 123. 3 residues coordinate Mg(2+): aspartate 124, lysine 125, and glutamate 447. Lysine 125 is modified (N6-carboxylysine). The active-site Proton acceptor is the serine 473.

Belongs to the IlvD/Edd family. In terms of assembly, homodimer. The cofactor is [2Fe-2S] cluster. Mg(2+) serves as cofactor.

The enzyme catalyses (2R)-2,3-dihydroxy-3-methylbutanoate = 3-methyl-2-oxobutanoate + H2O. It carries out the reaction (2R,3R)-2,3-dihydroxy-3-methylpentanoate = (S)-3-methyl-2-oxopentanoate + H2O. It functions in the pathway amino-acid biosynthesis; L-isoleucine biosynthesis; L-isoleucine from 2-oxobutanoate: step 3/4. The protein operates within amino-acid biosynthesis; L-valine biosynthesis; L-valine from pyruvate: step 3/4. Its function is as follows. Functions in the biosynthesis of branched-chain amino acids. Catalyzes the dehydration of (2R,3R)-2,3-dihydroxy-3-methylpentanoate (2,3-dihydroxy-3-methylvalerate) into 2-oxo-3-methylpentanoate (2-oxo-3-methylvalerate) and of (2R)-2,3-dihydroxy-3-methylbutanoate (2,3-dihydroxyisovalerate) into 2-oxo-3-methylbutanoate (2-oxoisovalerate), the penultimate precursor to L-isoleucine and L-valine, respectively. This Bordetella pertussis (strain Tohama I / ATCC BAA-589 / NCTC 13251) protein is Dihydroxy-acid dehydratase 2.